The following is a 225-amino-acid chain: NAD(P)H-quinone oxidoreductase subunit K, chloroplastic (225 aa).

Cysteine 43, cysteine 44, cysteine 108, and cysteine 139 together coordinate [4Fe-4S] cluster.

It belongs to the complex I 20 kDa subunit family. NDH is composed of at least 16 different subunits, 5 of which are encoded in the nucleus. It depends on [4Fe-4S] cluster as a cofactor.

It is found in the plastid. The protein localises to the chloroplast thylakoid membrane. The catalysed reaction is a plastoquinone + NADH + (n+1) H(+)(in) = a plastoquinol + NAD(+) + n H(+)(out). It carries out the reaction a plastoquinone + NADPH + (n+1) H(+)(in) = a plastoquinol + NADP(+) + n H(+)(out). NDH shuttles electrons from NAD(P)H:plastoquinone, via FMN and iron-sulfur (Fe-S) centers, to quinones in the photosynthetic chain and possibly in a chloroplast respiratory chain. The immediate electron acceptor for the enzyme in this species is believed to be plastoquinone. Couples the redox reaction to proton translocation, and thus conserves the redox energy in a proton gradient. In Liriodendron tulipifera (Tuliptree), this protein is NAD(P)H-quinone oxidoreductase subunit K, chloroplastic.